Reading from the N-terminus, the 141-residue chain is VLSPADKNNVKACWEKIGGHGAAYGAEALERMFLSFPTTKTYFPHFDLSHGSAQVQGHGKKVADALANAAAHVDDLPSALSALSDLHAHKLRVDPVNFKLLSHCLLVTLAAHHPAEFTPAVHASLDKFLASVSTVLTSKYR.

The 141-residue stretch at 1–141 folds into the Globin domain; that stretch reads VLSPADKNNV…VSTVLTSKYR (141 aa). Phosphoserine is present on serine 3. Lysine 7 and lysine 11 each carry N6-succinyllysine. Lysine 16 carries the N6-acetyllysine; alternate modification. Lysine 16 carries the N6-succinyllysine; alternate modification. Tyrosine 24 bears the Phosphotyrosine mark. Residue serine 35 is modified to Phosphoserine. An N6-succinyllysine modification is found at lysine 40. Serine 49 bears the Phosphoserine mark. Histidine 58 contributes to the O2 binding site. A heme b-binding site is contributed by histidine 87. Serine 102 is modified (phosphoserine). At threonine 108 the chain carries Phosphothreonine. Serine 124 and serine 131 each carry phosphoserine. Residues threonine 134 and threonine 137 each carry the phosphothreonine modification. The residue at position 138 (serine 138) is a Phosphoserine.

The protein belongs to the globin family. As to quaternary structure, heterotetramer of two alpha chains and two beta chains. As to expression, red blood cells.

Functionally, involved in oxygen transport from the lung to the various peripheral tissues. In terms of biological role, hemopressin acts as an antagonist peptide of the cannabinoid receptor CNR1. Hemopressin-binding efficiently blocks cannabinoid receptor CNR1 and subsequent signaling. The chain is Hemoglobin subunit alpha (HBA) from Urocitellus townsendii (Townsend's ground squirrel).